The chain runs to 579 residues: Glucose starvation modulator protein 1 (579 aa).

A DNA-binding region (zn(2)-C6 fungal-type) is located at residues 20 to 48 (CVFCHEKHLQCDLGRPCQNCSKRGIGDTC). Residues 43–53 (GIGDTCRDKER) are compositionally biased toward basic and acidic residues. 2 disordered regions span residues 43–75 (GIGD…STKS) and 319–342 (QMAS…GETV). The span at 54–64 (KPRKRGPRKVK) shows a compositional bias: basic residues. A compositionally biased stretch (polar residues) spans 330 to 339 (NDTSPESQGG). Positions 444 to 516 (LLEYESMAKL…DIFHEYLAFG (73 aa)) constitute a PAS domain.

Belongs to the ERT1/acuK family.

The protein resides in the nucleus. Transcription factor which regulates nonfermentable carbon utilization. This is Glucose starvation modulator protein 1 (GSM1) from Kluyveromyces lactis (strain ATCC 8585 / CBS 2359 / DSM 70799 / NBRC 1267 / NRRL Y-1140 / WM37) (Yeast).